Here is a 232-residue protein sequence, read N- to C-terminus: UPF0502 protein Aave_3438 (232 aa).

The protein belongs to the UPF0502 family.

The polypeptide is UPF0502 protein Aave_3438 (Paracidovorax citrulli (strain AAC00-1) (Acidovorax citrulli)).